The chain runs to 78 residues: CDC42 small effector protein 1 (78 aa).

2 S-palmitoyl cysteine lipidation sites follow: C10 and C11. Positions I30–G43 constitute a CRIB domain.

It belongs to the CDC42SE/SPEC family.

It is found in the cytoplasm. The protein localises to the cytoskeleton. It localises to the cell membrane. Probably involved in the organization of the actin cytoskeleton by acting downstream of CDC42, inducing actin filament assembly. This chain is CDC42 small effector protein 1 (CDC42SE1), found in Gallus gallus (Chicken).